The primary structure comprises 345 residues: 4-hydroxy-2-oxovalerate aldolase (345 aa).

The Pyruvate carboxyltransferase domain occupies 8–260; sequence ITVHDMTLRD…ETGVDVFKIQ (253 aa). 16 to 17 provides a ligand contact to substrate; it reads RD. Residue aspartate 17 participates in Mn(2+) binding. Residue histidine 20 is the Proton acceptor of the active site. Substrate-binding residues include serine 170 and histidine 199. Histidine 199 and histidine 201 together coordinate Mn(2+). Tyrosine 290 provides a ligand contact to substrate.

Belongs to the 4-hydroxy-2-oxovalerate aldolase family.

The enzyme catalyses (S)-4-hydroxy-2-oxopentanoate = acetaldehyde + pyruvate. The chain is 4-hydroxy-2-oxovalerate aldolase from Leptothrix cholodnii (strain ATCC 51168 / LMG 8142 / SP-6) (Leptothrix discophora (strain SP-6)).